Here is a 208-residue protein sequence, read N- to C-terminus: LexA repressor (208 aa).

The segment at residues 28-48 (RAEIARELGFRSANAAEEHLK) is a DNA-binding region (H-T-H motif). Catalysis depends on for autocatalytic cleavage activity residues Ser125 and Lys162.

This sequence belongs to the peptidase S24 family. In terms of assembly, homodimer.

The catalysed reaction is Hydrolysis of Ala-|-Gly bond in repressor LexA.. Its function is as follows. Represses a number of genes involved in the response to DNA damage (SOS response), including recA and lexA. In the presence of single-stranded DNA, RecA interacts with LexA causing an autocatalytic cleavage which disrupts the DNA-binding part of LexA, leading to derepression of the SOS regulon and eventually DNA repair. The protein is LexA repressor of Aliivibrio fischeri (strain MJ11) (Vibrio fischeri).